Here is a 500-residue protein sequence, read N- to C-terminus: MSHFPWLTIIVVLPISAGSSIGFLPYRGNKAVRWYTICICILELLLTTYAFCYHFQLDDPLIQLEEDYNWINLFDFNWRLGIDGLSMGPVLLTGFITTLATLAAWPVTRDSRLFHFLMLAMYSGQIGSFSSRDLLLFFMMWELELIPIYLLLSLWGGKKRLYSATKFILYTAGGSIFLLMGVSGMGLYSSNEPTLNFETLTNQSYPVALEIIFYIGFFIAYAAKSPIIPLHTWLPDTHGEAHYSTCMLLAGILLKMGAYGLVRINMELLPHAHSIFSPWLMIIGAIQIIYAASTSPGQRNLKKRIAYSSVSHMGFITIGIGSITDTGLNGSILQIISHGFIGAALFFLAGTTYDRIRLVYLDEMGGIAILMPKMFMMFSSFSMASLALPGMSGFVAESVVFLGIITSPKYFLMPKILITFVMAIGMILTPIYSLSMSRQIFYGYKLFNVSNSYFVDSGPRELFILICILLPVIGIGIYPDFVLSLSVDKVEAILSSYFHR.

A run of 14 helical transmembrane segments spans residues 4–24, 37–57, 87–107, 113–130, 134–154, 167–187, 208–228, 242–262, 272–292, 305–325, 330–350, 386–406, 416–436, and 462–482; these read FPWLTIIVVLPISAGSSIGFL, ICICILELLLTTYAFCYHFQL, MGPVLLTGFITTLATLAAWPV, LFHFLMLAMYSGQIGSFS, LLLFFMMWELELIPIYLLLSL, FILYTAGGSIFLLMGVSGMGL, ALEIIFYIGFFIAYAAKSPII, HYSTCMLLAGILLKMGAYGLV, AHSIFSPWLMIIGAIQIIYAA, IAYSSVSHMGFITIGIGSITD, GSILQIISHGFIGAALFFLAG, LALPGMSGFVAESVVFLGIIT, ILITFVMAIGMILTPIYSLSM, and LFILICILLPVIGIGIYPDFV.

This sequence belongs to the complex I subunit 4 family.

The protein resides in the plastid. The protein localises to the chloroplast thylakoid membrane. The enzyme catalyses a plastoquinone + NADH + (n+1) H(+)(in) = a plastoquinol + NAD(+) + n H(+)(out). It catalyses the reaction a plastoquinone + NADPH + (n+1) H(+)(in) = a plastoquinol + NADP(+) + n H(+)(out). The polypeptide is NAD(P)H-quinone oxidoreductase chain 4, chloroplastic (Illicium oligandrum (Star anise)).